We begin with the raw amino-acid sequence, 338 residues long: Ferredoxin--NADP reductase (338 aa).

Residues Asp36, Gln44, Tyr49, Val89, Phe123, Asp290, and Thr331 each coordinate FAD.

The protein belongs to the ferredoxin--NADP reductase type 2 family. As to quaternary structure, homodimer. FAD serves as cofactor.

The enzyme catalyses 2 reduced [2Fe-2S]-[ferredoxin] + NADP(+) + H(+) = 2 oxidized [2Fe-2S]-[ferredoxin] + NADPH. This Anaplasma phagocytophilum (strain HZ) protein is Ferredoxin--NADP reductase.